A 681-amino-acid chain; its full sequence is MFERNQKTIFVLDHTRYFSISSEQYISMDYLKGKPVQETPASGSSSMVVGTQLSKSLWTCAVESSIEYCRIVWDLFPGKKHVRFIVSDTAAHIVNTWSPSTQNMSHVSNAMMMVSVPSRSIPQSSDYSVIHGLRAAIEALAEPTDEQLLATQVGCKQIPNKGRVICITSARDNTSMKSLEDIFNTVLLQQNALVAPPSKKGLQIDHCHLVILNIVPLGVESLVTNRNLLEISPLLDVEIHTVNAPDISDKLLHLIMGHYDLASTTVTNIPMKEEQNANSSANYDVEILHERAAHTRVCGPDFTLTTSIKPGTTYETVTLKWCTPRGCGSSDLQPCVGQYNVTPVDVTSRPSSCLINFLLNGRSVLLEVPRKTGTKTTSHMLSARGGEIFVHSLSIARSAMDEAPSISDGPGGRVSDYRIPELGQLFKMSRMVPLKTKPKGKCSQGEHLWRRLPRYFPRTTNVTILFNLQRQLNWLPHFLHLIVKEDMDKQDEVRCQQQIHELYKSASRGDMLPFNTTNNARPKVGKTKDQYRLFYRELEQLIQLNAQTPHHKNLLESLQSLRAAYGDVSSKLDPGASHLRSYTESPLSPERLEPTSSASNSSSSILKASKRRMSSSGQRSLLDMISIAERSQSNKRLDFSGRLCTPLGQTAKLYPDFGNKEKDILTPGVVTSNLKDESIRS.

Residues 574–619 (PGASHLRSYTESPLSPERLEPTSSASNSSSSILKASKRRMSSSGQR) are disordered. Positions 606–612 (LKASKRR) match the Nuclear localization signal (NLS) motif.

This sequence belongs to the Integrator subunit 13 family. As to quaternary structure, belongs to the multiprotein complex Integrator, at least composed of IntS1, IntS2, IntS3, IntS4, omd/IntS5, IntS6, defl/IntS7, IntS8, IntS9, IntS10, IntS11, IntS12, asun/IntS13, IntS14 and IntS15. The core complex associates with protein phosphatase 2A subunits mts/PP2A and Pp2A-29B, to form the Integrator-PP2A (INTAC) complex. In terms of processing, phosphorylated.

It localises to the nucleus. The protein resides in the cytoplasm. Its subcellular location is the perinuclear region. In terms of biological role, component of the integrator complex, a multiprotein complex that terminates RNA polymerase II (Pol II) transcription in the promoter-proximal region of genes. The integrator complex provides a quality checkpoint during transcription elongation by driving premature transcription termination of transcripts that are unfavorably configured for transcriptional elongation: the complex terminates transcription by (1) catalyzing dephosphorylation of the C-terminal domain (CTD) of Pol II subunit Polr2A/Rbp1 and Spt5, and (2) degrading the exiting nascent RNA transcript via endonuclease activity. The integrator complex is also involved in the 3'-end processing of the U7 snRNA, and also the spliceosomal snRNAs U1, U2, U4 and U5. This chain is Protein asunder (asun), found in Drosophila virilis (Fruit fly).